Here is a 456-residue protein sequence, read N- to C-terminus: Phosphomethylpyrimidine synthase (456 aa).

Substrate is bound by residues Asn-80, Met-109, Tyr-139, His-175, Ser-195–Gly-197, Asp-236–Arg-239, and Glu-275. His-279 is a binding site for Zn(2+). A substrate-binding site is contributed by Tyr-302. His-343 is a Zn(2+) binding site. 3 residues coordinate [4Fe-4S] cluster: Cys-423, Cys-426, and Cys-431.

This sequence belongs to the ThiC family. Requires [4Fe-4S] cluster as cofactor.

It carries out the reaction 5-amino-1-(5-phospho-beta-D-ribosyl)imidazole + S-adenosyl-L-methionine = 4-amino-2-methyl-5-(phosphooxymethyl)pyrimidine + CO + 5'-deoxyadenosine + formate + L-methionine + 3 H(+). The protein operates within cofactor biosynthesis; thiamine diphosphate biosynthesis. Its function is as follows. Catalyzes the synthesis of the hydroxymethylpyrimidine phosphate (HMP-P) moiety of thiamine from aminoimidazole ribotide (AIR) in a radical S-adenosyl-L-methionine (SAM)-dependent reaction. The sequence is that of Phosphomethylpyrimidine synthase from Prochlorococcus marinus (strain AS9601).